The following is a 203-amino-acid chain: Ribonuclease HII (203 aa).

In terms of domain architecture, RNase H type-2 spans 15–201 (LLVAGLDEAG…VAQAPLRFPE (187 aa)). Residues Asp-21, Glu-22, and Asp-111 each coordinate a divalent metal cation.

This sequence belongs to the RNase HII family. The cofactor is Mn(2+). It depends on Mg(2+) as a cofactor.

It is found in the cytoplasm. The enzyme catalyses Endonucleolytic cleavage to 5'-phosphomonoester.. In terms of biological role, endonuclease that specifically degrades the RNA of RNA-DNA hybrids. The polypeptide is Ribonuclease HII (Thermus thermophilus (strain ATCC 27634 / DSM 579 / HB8)).